A 368-amino-acid polypeptide reads, in one-letter code: S-adenosylmethionine decarboxylase proenzyme (368 aa).

Active-site residues include E26 and E29. S83 functions as the Schiff-base intermediate with substrate; via pyruvic acid in the catalytic mechanism. At S83 the chain carries Pyruvic acid (Ser); by autocatalysis. C97 serves as the catalytic Proton donor; for catalytic activity. Residues S246 and H261 each act as proton acceptor; for processing activity in the active site.

This sequence belongs to the eukaryotic AdoMetDC family. As to quaternary structure, heterotetramer of two alpha and two beta chains. It depends on pyruvate as a cofactor. Is synthesized initially as an inactive proenzyme. Formation of the active enzyme involves a self-maturation process in which the active site pyruvoyl group is generated from an internal serine residue via an autocatalytic post-translational modification. Two non-identical subunits are generated from the proenzyme in this reaction, and the pyruvate is formed at the N-terminus of the alpha chain, which is derived from the carboxyl end of the proenzyme. The post-translation cleavage follows an unusual pathway, termed non-hydrolytic serinolysis, in which the side chain hydroxyl group of the serine supplies its oxygen atom to form the C-terminus of the beta chain, while the remainder of the serine residue undergoes an oxidative deamination to produce ammonia and the pyruvoyl group blocking the N-terminus of the alpha chain.

The enzyme catalyses S-adenosyl-L-methionine + H(+) = S-adenosyl 3-(methylsulfanyl)propylamine + CO2. It functions in the pathway amine and polyamine biosynthesis; S-adenosylmethioninamine biosynthesis; S-adenosylmethioninamine from S-adenosyl-L-methionine: step 1/1. Functionally, essential for biosynthesis of the polyamines spermidine and spermine. Polyamines are essential for cell proliferation and are implicated in cellular processes, ranging from DNA replication to apoptosis. This Caenorhabditis elegans protein is S-adenosylmethionine decarboxylase proenzyme.